The chain runs to 141 residues: Nucleoside diphosphate kinase (141 aa).

6 residues coordinate ATP: Lys-11, Phe-59, Arg-87, Thr-93, Arg-104, and Asn-114. The active-site Pros-phosphohistidine intermediate is His-117.

Belongs to the NDK family. As to quaternary structure, homotetramer. Requires Mg(2+) as cofactor.

It is found in the cytoplasm. It carries out the reaction a 2'-deoxyribonucleoside 5'-diphosphate + ATP = a 2'-deoxyribonucleoside 5'-triphosphate + ADP. The enzyme catalyses a ribonucleoside 5'-diphosphate + ATP = a ribonucleoside 5'-triphosphate + ADP. Its function is as follows. Major role in the synthesis of nucleoside triphosphates other than ATP. The ATP gamma phosphate is transferred to the NDP beta phosphate via a ping-pong mechanism, using a phosphorylated active-site intermediate. The chain is Nucleoside diphosphate kinase from Haemophilus influenzae (strain 86-028NP).